Consider the following 215-residue polypeptide: Translation initiation factor 6 (215 aa).

Belongs to the eIF-6 family.

In terms of biological role, binds to the 50S ribosomal subunit and prevents its association with the 30S ribosomal subunit to form the 70S initiation complex. The sequence is that of Translation initiation factor 6 from Archaeoglobus fulgidus (strain ATCC 49558 / DSM 4304 / JCM 9628 / NBRC 100126 / VC-16).